The chain runs to 333 residues: Lipoyl synthase (333 aa).

Residues M1–Q15 are compositionally biased toward polar residues. Residues M1 to T34 are disordered. [4Fe-4S] cluster contacts are provided by C80, C85, C91, C106, C110, C113, and S320. The 219-residue stretch at C91–T309 folds into the Radical SAM core domain.

The protein belongs to the radical SAM superfamily. Lipoyl synthase family. It depends on [4Fe-4S] cluster as a cofactor.

The protein resides in the cytoplasm. The catalysed reaction is [[Fe-S] cluster scaffold protein carrying a second [4Fe-4S](2+) cluster] + N(6)-octanoyl-L-lysyl-[protein] + 2 oxidized [2Fe-2S]-[ferredoxin] + 2 S-adenosyl-L-methionine + 4 H(+) = [[Fe-S] cluster scaffold protein] + N(6)-[(R)-dihydrolipoyl]-L-lysyl-[protein] + 4 Fe(3+) + 2 hydrogen sulfide + 2 5'-deoxyadenosine + 2 L-methionine + 2 reduced [2Fe-2S]-[ferredoxin]. It participates in protein modification; protein lipoylation via endogenous pathway; protein N(6)-(lipoyl)lysine from octanoyl-[acyl-carrier-protein]: step 2/2. In terms of biological role, catalyzes the radical-mediated insertion of two sulfur atoms into the C-6 and C-8 positions of the octanoyl moiety bound to the lipoyl domains of lipoate-dependent enzymes, thereby converting the octanoylated domains into lipoylated derivatives. This Bordetella bronchiseptica (strain ATCC BAA-588 / NCTC 13252 / RB50) (Alcaligenes bronchisepticus) protein is Lipoyl synthase.